A 384-amino-acid polypeptide reads, in one-letter code: 1-deoxy-D-xylulose 5-phosphate reductoisomerase (384 aa).

Positions 10, 11, 12, 13, 37, 38, and 124 each coordinate NADPH. A 1-deoxy-D-xylulose 5-phosphate-binding site is contributed by Lys-125. Residue Glu-126 coordinates NADPH. Asp-150 lines the Mn(2+) pocket. 1-deoxy-D-xylulose 5-phosphate is bound by residues Ser-151, Glu-152, Ser-176, and His-199. Mn(2+) is bound at residue Glu-152. Gly-205 contacts NADPH. 4 residues coordinate 1-deoxy-D-xylulose 5-phosphate: Ser-212, Asn-217, Lys-218, and Glu-221. Mn(2+) is bound at residue Glu-221.

This sequence belongs to the DXR family. Requires Mg(2+) as cofactor. It depends on Mn(2+) as a cofactor.

The enzyme catalyses 2-C-methyl-D-erythritol 4-phosphate + NADP(+) = 1-deoxy-D-xylulose 5-phosphate + NADPH + H(+). It functions in the pathway isoprenoid biosynthesis; isopentenyl diphosphate biosynthesis via DXP pathway; isopentenyl diphosphate from 1-deoxy-D-xylulose 5-phosphate: step 1/6. Its function is as follows. Catalyzes the NADPH-dependent rearrangement and reduction of 1-deoxy-D-xylulose-5-phosphate (DXP) to 2-C-methyl-D-erythritol 4-phosphate (MEP). The polypeptide is 1-deoxy-D-xylulose 5-phosphate reductoisomerase (Clostridium perfringens (strain 13 / Type A)).